We begin with the raw amino-acid sequence, 358 residues long: Aurora kinase (358 aa).

The interval M1–K49 is disordered. Positions S20–P35 are enriched in polar residues. One can recognise a Protein kinase domain in the interval F100–W358. Residues L106–V114 and K129 each bind ATP. D223 acts as the Proton acceptor in catalysis.

It belongs to the protein kinase superfamily. Ser/Thr protein kinase family. Aurora subfamily.

Its subcellular location is the nucleus. The protein localises to the cytoplasm. It is found in the cytoskeleton. The protein resides in the spindle. It localises to the chromosome. Its subcellular location is the centromere. The protein localises to the kinetochore. The catalysed reaction is L-seryl-[protein] + ATP = O-phospho-L-seryl-[protein] + ADP + H(+). It catalyses the reaction L-threonyl-[protein] + ATP = O-phospho-L-threonyl-[protein] + ADP + H(+). In terms of biological role, component of the chromosomal passenger complex (CPC), a complex that acts as a key regulator of chromosome segregation and cytokinesis. Has a role in error-correction of aberrent kinetochore-microtubule attachments to ensure that sister kinetochores become bioriented and connect to opposite poles by promoting spindle assembly checkpoint signaling. The chain is Aurora kinase (IPL1) from Candida glabrata (strain ATCC 2001 / BCRC 20586 / JCM 3761 / NBRC 0622 / NRRL Y-65 / CBS 138) (Yeast).